We begin with the raw amino-acid sequence, 737 residues long: Protein penguin (737 aa).

The interval 1 to 128 (MVSSEPKGPA…EKKDLKLKRK (128 aa)) is disordered. Composition is skewed to basic and acidic residues over residues 76–89 (KKFD…DKRL) and 107–122 (EGEK…EKKD). In terms of domain architecture, PUM-HD spans 139-490 (EANQIHEKLR…EILEQIEAPI (352 aa)). 5 Pumilio repeats span residues 167–202 (NVGD…EISE), 203–238 (KLLP…KLVD), 239–274 (SLYG…YMRQ), 388–425 (NIKE…AIYD), and 426–462 (HLHG…EFIR). The tract at residues 577-638 (VESSSDDEDE…EEEPAAPLVS (62 aa)) is disordered. Residues 580–600 (SSDDEDEDEDEDEESDDEGDE) are compositionally biased toward acidic residues. The segment covering 601–615 (KEQKEAAADDAEPKV) has biased composition (basic and acidic residues). Residues 616–626 (KKAKKEPKKPK) are compositionally biased toward basic residues.

This Drosophila melanogaster (Fruit fly) protein is Protein penguin.